The primary structure comprises 117 residues: Flagellar transcriptional regulator FlhD (117 aa).

The protein belongs to the FlhD family. Homodimer; disulfide-linked. Forms a heterohexamer composed of two FlhC and four FlhD subunits. Each FlhC binds a FlhD dimer, forming a heterotrimer, and a hexamer assembles by dimerization of two heterotrimers.

It is found in the cytoplasm. Functionally, functions in complex with FlhC as a master transcriptional regulator that regulates transcription of several flagellar and non-flagellar operons by binding to their promoter region. Activates expression of class 2 flagellar genes, including fliA, which is a flagellum-specific sigma factor that turns on the class 3 genes. Also regulates genes whose products function in a variety of physiological pathways. This is Flagellar transcriptional regulator FlhD from Photorhabdus laumondii subsp. laumondii (strain DSM 15139 / CIP 105565 / TT01) (Photorhabdus luminescens subsp. laumondii).